Reading from the N-terminus, the 681-residue chain is MGIPVHRVSLGDAWSSRMHPDMESERCAQSFSVERLTNILDGGAQHTALRRKVESIIHGNPQFSSKDNYFMSQNELYEAATRKRYHLQKIAQRMGWTEEGRELEYAHRALSADLNLNLQGIFLKALRSLGSEEQIAKWEPLGKTFQIISTYAQTELGHGTYLQGLETEATYDAATQEFVIHSPTVTATKWWPGDLGRSATHALILAQLICSGARRGMHAFIVPVRSLQDHTPLPGITIGDIGPKMGLQHIDNGFLKMDHVRVPRENMLSRFAQVLPDGAYIKLGTAQSNYLGMLVTRVHLLLGAILSPLQKACVIATRYSVIRHQCRLRPSDPEVKILEHQTQQQKLFPQLAMCYAFHFLATGLLEFFQQAYKNILDRDFTLLPELHALSTGTKAMMSDFCTQGAEQCRRACGGHGYSKLSGLPSLVTSVTASCTYEGENTVLYLQVARFLVKSCLQAQGFPGSTSQRSLPRSVSYLALPDLARCPAQTAADFFCPALYTAAWAHVAARLTKDSVHHLQALRQSGADEHEAWNQTTIIHLQAAKAHCYYISVKSFKEALEKLENEPAIQQVLKRLCDLHALHGILTNSGDFLHDGFLSGAQVDMARTAYMDLLPLIRKDAILLTDAFDFTDQCLNSALGCYDGNVYERLFEWAQRSPTNTQENPAYKKYIQPLLQSWRSNL.

Residue Ser9 is modified to Phosphoserine. N6-succinyllysine is present on residues Lys66, Lys137, Lys453, Lys561, and Lys667. The short motif at 679 to 681 (SNL) is the Microbody targeting signal element.

Belongs to the acyl-CoA oxidase family. In terms of assembly, homodimer. Requires FAD as cofactor. Liver and kidney.

The protein resides in the peroxisome. The catalysed reaction is (25R)-3alpha,7alpha,12alpha-trihydroxy-5beta-cholestan-26-oyl-CoA + A + H2O = (24R,25R)-3alpha,7alpha,12alpha,24-tetrahydroxy-5beta-cholestan-26-oyl-CoA + AH2. The enzyme catalyses (25S)-3alpha,7alpha,12alpha-trihydroxy-5beta-cholestan-26-oyl-CoA + O2 = (24E)-3alpha,7alpha,12alpha-trihydroxy-5beta-cholest-24-en-26-oyl-CoA + H2O2. In terms of biological role, oxidizes the CoA esters of the bile acid intermediates di- and tri-hydroxycholestanoic acids. Capable of oxidizing short as well as long chain 2-methyl branched fatty acids. This is Peroxisomal acyl-coenzyme A oxidase 2 from Oryctolagus cuniculus (Rabbit).